The chain runs to 357 residues: Protein FAM118A (357 aa).

Met1 carries the post-translational modification N-acetylmethionine. A helical membrane pass occupies residues 30 to 50 (LLLVIGTGVSAAVAPGIPALC). Residue Ser311 is modified to Phosphoserine.

It belongs to the FAM118 family.

It is found in the membrane. In Homo sapiens (Human), this protein is Protein FAM118A (FAM118A).